A 185-amino-acid polypeptide reads, in one-letter code: MINEIKKDTQERMEKSLEALKGHISKIRTGRAQPSLLDAIQVEYYGSATPLRQLANVVAEDARTLAVTVFDRSLISAVEKAILTSDLGLNPSSAGTTIRVPLPPLTEERRRDLIKIVKGEGEQGKVSIRNIRRDANDKIKTLEKEKQISENDERKAQDDIQKITDIYIKKVDEILADKEKELMDF.

The protein belongs to the RRF family.

It is found in the cytoplasm. In terms of biological role, responsible for the release of ribosomes from messenger RNA at the termination of protein biosynthesis. May increase the efficiency of translation by recycling ribosomes from one round of translation to another. This Glaesserella parasuis serovar 5 (strain SH0165) (Haemophilus parasuis) protein is Ribosome-recycling factor.